The chain runs to 298 residues: MMDSEAHEKRPPMLTSSNQDLSPHIAGVGDMKHYLCGYCAAFNNVAITYPVQKILFRQQLYGIKTRDAVLQLRKDGFRNLYRGILPPLMQKTTTLALMFGLYEDLSRLLHKHVSSAPEFATRSVAALLAGTTEAILTPFERVQTLLQDHKHHDKFTNTYQAFRALRCHGIAEYYRGMVPILFRNGFGNVLFFGLRGPIKESLPTATTYSAHLVNDFICGGVLGAVLGFLSFPINVVKARIQSQIGGPFLSLPMVFKTIWIERDRKLINLFRGAHLNYHRSLISWGIINATYEFLLKIV.

Over residues 1–11 the composition is skewed to basic and acidic residues; the sequence is MMDSEAHEKRP. Residues 1–21 are disordered; it reads MMDSEAHEKRPPMLTSSNQDL. 3 Solcar repeats span residues 28-108, 117-201, and 214-297; these read VGDM…LSRL, PEFA…IKES, and NDFI…LLKI. Helical transmembrane passes span 36–56, 85–105, 119–139, 180–200, 216–236, and 269–290; these read CGYC…KILF, LPPL…YEDL, FATR…LTPF, ILFR…PIKE, FICG…INVV, and LFRG…INAT.

Belongs to the mitochondrial carrier (TC 2.A.29) family.

The protein localises to the mitochondrion inner membrane. The catalysed reaction is NAD(+)(in) = NAD(+)(out). Functionally, mitochondrial membrane carrier protein that mediates the import of NAD(+) into mitochondria. Mitochondrial NAD(+) is required for glycolysis and mitochondrial respiration. Compared to SLC25A52, SLC25A51-mediated transport is essential for the import of NAD(+) in mitochondria. The transport mechanism, uniport or antiport, its electrogenicity and substrate selectivity, remain to be elucidated. This Mus musculus (Mouse) protein is Mitochondrial nicotinamide adenine dinucleotide transporter SLC25A51.